The sequence spans 330 residues: Alpha-1,6-glucosyltransferase (330 aa).

Belongs to the glycosyltransferase group 1 family. Does not require a metal cofactor. is required as a cofactor.

The protein localises to the cytoplasm. Its pathway is protein modification; protein glycosylation. Functionally, catalyzes the transfer of a glucose moiety from UDP-glucose to another glucose that is N-linked to an asparagine within a peptide or protein. Can act in a repetitive manner, and this way it elongates the N-linked glucose by a glycan chain consisting of several alpha-1-&gt;6 linked glucose residues. Is able to add up to six glucose units in vitro. Cannot use UDP-Gal, UDP-GlcNAc or UDP-GalNAc as a substrate donor. The polypeptide is Alpha-1,6-glucosyltransferase (Actinobacillus pleuropneumoniae serotype 7 (strain AP76)).